Reading from the N-terminus, the 445-residue chain is Phosphoglucosamine mutase (445 aa).

S102 serves as the catalytic Phosphoserine intermediate. 4 residues coordinate Mg(2+): S102, D241, D243, and D245. S102 bears the Phosphoserine mark.

The protein belongs to the phosphohexose mutase family. Mg(2+) is required as a cofactor. Post-translationally, activated by phosphorylation.

The enzyme catalyses alpha-D-glucosamine 1-phosphate = D-glucosamine 6-phosphate. Functionally, catalyzes the conversion of glucosamine-6-phosphate to glucosamine-1-phosphate. This Variovorax paradoxus (strain S110) protein is Phosphoglucosamine mutase.